The sequence spans 122 residues: UPF0102 protein XOO3839 (122 aa).

Belongs to the UPF0102 family.

The chain is UPF0102 protein XOO3839 from Xanthomonas oryzae pv. oryzae (strain KACC10331 / KXO85).